Consider the following 268-residue polypeptide: Acyl-CoA-binding domain-containing protein 4 (268 aa).

The ACB domain maps to 12–101 (CQKQFQAAVS…MKLVAQKVID (90 aa)). An acyl-CoA contacts are provided by residues 23-32 (IQNLPKNGSY), 43-47 (YSYYK), Lys69, and Tyr88. Positions 151–175 (AVSEPPCLPKEPAPPSPESHSPRDL) are disordered. Positions 156–167 (PCLPKEPAPPSP) are enriched in pro residues. A phosphoserine mark is found at Ser166 and Ser171.

In terms of biological role, binds medium- and long-chain acyl-CoA esters and may function as an intracellular carrier of acyl-CoA esters. This chain is Acyl-CoA-binding domain-containing protein 4 (ACBD4), found in Homo sapiens (Human).